The primary structure comprises 215 residues: MNAPASSPARRTKKLPPLRVGIGGPVGSGKTTLLEMLCKAMRDTYDLVAITNDIYTKEDQRLLTVAGALPEERIMGVETGGCPHTAIREDASINLEAVDRMLSRFPDADIVFIESGGDNLAATFSPELSDLTIYVIDVAGGEKIPRKGGPGITKSDLLVINKTDLAPLVGANLDVMASDTKKMRGERPYVMTNLKALDGVADVIAFIEKKGLLTV.

Positions 1–21 are disordered; sequence MNAPASSPARRTKKLPPLRVG. A GTP-binding site is contributed by 24-31; it reads GPVGSGKT.

Belongs to the SIMIBI class G3E GTPase family. UreG subfamily. As to quaternary structure, homodimer. UreD, UreF and UreG form a complex that acts as a GTP-hydrolysis-dependent molecular chaperone, activating the urease apoprotein by helping to assemble the nickel containing metallocenter of UreC. The UreE protein probably delivers the nickel.

It is found in the cytoplasm. Facilitates the functional incorporation of the urease nickel metallocenter. This process requires GTP hydrolysis, probably effectuated by UreG. The chain is Urease accessory protein UreG from Burkholderia vietnamiensis (strain G4 / LMG 22486) (Burkholderia cepacia (strain R1808)).